Consider the following 295-residue polypeptide: Ribosomal protein L11 methyltransferase (295 aa).

Residues T146, G167, D189, and N231 each contribute to the S-adenosyl-L-methionine site.

It belongs to the methyltransferase superfamily. PrmA family.

The protein resides in the cytoplasm. It carries out the reaction L-lysyl-[protein] + 3 S-adenosyl-L-methionine = N(6),N(6),N(6)-trimethyl-L-lysyl-[protein] + 3 S-adenosyl-L-homocysteine + 3 H(+). Methylates ribosomal protein L11. In Vibrio cholerae serotype O1 (strain ATCC 39541 / Classical Ogawa 395 / O395), this protein is Ribosomal protein L11 methyltransferase.